The chain runs to 304 residues: Polyisoprenyl-teichoic acid--peptidoglycan teichoic acid transferase TagU (304 aa).

The Cytoplasmic segment spans residues 1–4 (MKKK). The chain crosses the membrane as a helical; Signal-anchor for type II membrane protein span at residues 5-25 (ILFWILGIIGIMIIGGGVYAY). Topologically, residues 26 to 304 (NVYSSVSKTL…KLRAHLELTK (279 aa)) are extracellular.

The protein belongs to the LytR/CpsA/Psr (LCP) family.

It localises to the cell membrane. The protein operates within cell wall biogenesis. Its function is as follows. May catalyze the final step in cell wall teichoic acid biosynthesis, the transfer of the anionic cell wall polymers (APs) from their lipid-linked precursor to the cell wall peptidoglycan (PG). The protein is Polyisoprenyl-teichoic acid--peptidoglycan teichoic acid transferase TagU of Bacillus mycoides (strain KBAB4) (Bacillus weihenstephanensis).